A 342-amino-acid polypeptide reads, in one-letter code: DDB1- and CUL4-associated factor 7 (342 aa).

7 WD repeats span residues 6–52 (KRKE…LVGL), 60–100 (ICRN…VWRV), 108–150 (ECLL…IWGL), 165–206 (HVKT…MFDL), 213–252 (TIIY…ILDV), 257–296 (TPVA…IWDI), and 303–342 (IEDP…ILRV).

It belongs to the WD repeat DCAF7 family. In terms of assembly, interacts with DYRK1A, DYRK1B and DIAPH1. Interacts with DDB1. Interacts with ZNF703. Interacts with human adenovirus 5 E1A protein.

It localises to the cytoplasm. Its subcellular location is the nucleus. The protein operates within protein modification; protein ubiquitination. In terms of biological role, involved in craniofacial development. Acts upstream of the EDN1 pathway and is required for formation of the upper jaw equivalent, the palatoquadrate. The activity required for EDN1 pathway function differs between the first and second arches. Associates with DIAPH1 and controls GLI1 transcriptional activity. Could be involved in normal and disease skin development. May function as a substrate receptor for CUL4-DDB1 E3 ubiquitin-protein ligase complex. The chain is DDB1- and CUL4-associated factor 7 (DCAF7) from Homo sapiens (Human).